Reading from the N-terminus, the 61-residue chain is Photosystem II reaction center protein K (61 aa).

Residues methionine 1–glycine 24 constitute a propeptide that is removed on maturation. Residues isoleucine 36–alanine 56 traverse the membrane as a helical segment.

It belongs to the PsbK family. As to quaternary structure, PSII is composed of 1 copy each of membrane proteins PsbA, PsbB, PsbC, PsbD, PsbE, PsbF, PsbH, PsbI, PsbJ, PsbK, PsbL, PsbM, PsbT, PsbX, PsbY, PsbZ, Psb30/Ycf12, at least 3 peripheral proteins of the oxygen-evolving complex and a large number of cofactors. It forms dimeric complexes.

The protein resides in the plastid. It localises to the chloroplast thylakoid membrane. Its function is as follows. One of the components of the core complex of photosystem II (PSII). PSII is a light-driven water:plastoquinone oxidoreductase that uses light energy to abstract electrons from H(2)O, generating O(2) and a proton gradient subsequently used for ATP formation. It consists of a core antenna complex that captures photons, and an electron transfer chain that converts photonic excitation into a charge separation. The chain is Photosystem II reaction center protein K from Nicotiana tomentosiformis (Tobacco).